Consider the following 273-residue polypeptide: Formamidopyrimidine-DNA glycosylase (273 aa).

Pro2 (schiff-base intermediate with DNA) is an active-site residue. The active-site Proton donor is Glu3. Residue Lys58 is the Proton donor; for beta-elimination activity of the active site. DNA is bound by residues His91 and Arg110. The segment at 238–272 (QVYGKTGQPCPRCASMIVKIKLGGRGTHLCPHCQK) adopts an FPG-type zinc-finger fold. The Proton donor; for delta-elimination activity role is filled by Arg262.

It belongs to the FPG family. Monomer. The cofactor is Zn(2+).

The enzyme catalyses Hydrolysis of DNA containing ring-opened 7-methylguanine residues, releasing 2,6-diamino-4-hydroxy-5-(N-methyl)formamidopyrimidine.. The catalysed reaction is 2'-deoxyribonucleotide-(2'-deoxyribose 5'-phosphate)-2'-deoxyribonucleotide-DNA = a 3'-end 2'-deoxyribonucleotide-(2,3-dehydro-2,3-deoxyribose 5'-phosphate)-DNA + a 5'-end 5'-phospho-2'-deoxyribonucleoside-DNA + H(+). Functionally, involved in base excision repair of DNA damaged by oxidation or by mutagenic agents. Acts as a DNA glycosylase that recognizes and removes damaged bases. Has a preference for oxidized purines, such as 7,8-dihydro-8-oxoguanine (8-oxoG). Has AP (apurinic/apyrimidinic) lyase activity and introduces nicks in the DNA strand. Cleaves the DNA backbone by beta-delta elimination to generate a single-strand break at the site of the removed base with both 3'- and 5'-phosphates. The sequence is that of Formamidopyrimidine-DNA glycosylase from Streptococcus thermophilus (strain ATCC BAA-250 / LMG 18311).